The following is an 84-amino-acid chain: U21-theraphotoxin-Cg1a 1 (84 aa).

Residues 1–21 form the signal peptide; that stretch reads MKVSVLITLAVLGVMFLLTSA. The propeptide occupies 22–47; sequence EERGSDQMDSPAWLKSMEIIFQSEER. Intrachain disulfides connect Cys49/Cys63, Cys56/Cys68, and Cys62/Cys76. Valine amide is present on Val82.

It belongs to the neurotoxin 10 (Hwtx-1) family. 05 (F4a) subfamily. Expressed by the venom gland.

Its subcellular location is the secreted. Probable ion channel inhibitor. This is U21-theraphotoxin-Cg1a 1 from Chilobrachys guangxiensis (Chinese earth tiger tarantula).